Consider the following 258-residue polypeptide: Arylamine N-acetyltransferase 1 (258 aa).

The active-site Acyl-thioester intermediate is the Cys59. 97–98 (IH) serves as a coordination point for substrate. Catalysis depends on residues His98 and Asp113. Residues Tyr199 and Thr205 each coordinate CoA.

Belongs to the arylamine N-acetyltransferase family.

The protein localises to the cytoplasm. The enzyme catalyses an arylamine + acetyl-CoA = an N-acetylarylamine + CoA. Participates in the detoxification of a plethora of hydrazine and arylamine drugs. The sequence is that of Arylamine N-acetyltransferase 1 (NAT1) from Felis catus (Cat).